Consider the following 61-residue polypeptide: Small ribosomal subunit protein bS21 (61 aa).

Residues 34–61 (KREHYESPSVKRKKKSEAARKRKYKYNK) are disordered. Residues 43-61 (VKRKKKSEAARKRKYKYNK) show a composition bias toward basic residues.

The protein belongs to the bacterial ribosomal protein bS21 family.

This Thermoanaerobacter pseudethanolicus (strain ATCC 33223 / 39E) (Clostridium thermohydrosulfuricum) protein is Small ribosomal subunit protein bS21.